We begin with the raw amino-acid sequence, 138 residues long: Nucleoside diphosphate kinase (138 aa).

Lys-9, Phe-57, Arg-85, Thr-91, Arg-102, and Asn-112 together coordinate ATP. His-115 (pros-phosphohistidine intermediate) is an active-site residue.

This sequence belongs to the NDK family. As to quaternary structure, homotetramer. Mg(2+) is required as a cofactor.

It is found in the cytoplasm. It carries out the reaction a 2'-deoxyribonucleoside 5'-diphosphate + ATP = a 2'-deoxyribonucleoside 5'-triphosphate + ADP. It catalyses the reaction a ribonucleoside 5'-diphosphate + ATP = a ribonucleoside 5'-triphosphate + ADP. Its function is as follows. Major role in the synthesis of nucleoside triphosphates other than ATP. The ATP gamma phosphate is transferred to the NDP beta phosphate via a ping-pong mechanism, using a phosphorylated active-site intermediate. The chain is Nucleoside diphosphate kinase from Desulfatibacillum aliphaticivorans.